The chain runs to 370 residues: Protein Wnt-1 (370 aa).

The N-terminal stretch at 1–19 (MRVLALLLAVKAACVLLVS) is a signal peptide. An N-linked (GlcNAc...) asparagine glycan is attached at N28. 5 disulfide bridges follow: C92-C103, C142-C150, C152-C169, C217-C231, and C219-C226. A lipid anchor (O-palmitoleoyl serine; by PORCN) is attached at S223. The interval 261–282 (GSNRASHRADPRHLEPENPAHK) is disordered. Basic and acidic residues predominate over residues 267-280 (HRADPRHLEPENPA). 6 disulfides stabilise this stretch: C299-C330, C315-C325, C329-C369, C345-C360, C347-C357, and C352-C353. N316 is a glycosylation site (N-linked (GlcNAc...) asparagine). N359 carries an N-linked (GlcNAc...) asparagine glycan.

The protein belongs to the Wnt family. Post-translationally, palmitoleoylation is required for efficient binding to frizzled receptors. Palmitoleoylation is necessary for proper trafficking to cell surface. Depalmitoleoylated by NOTUM, leading to inhibit Wnt signaling pathway.

It localises to the secreted. The protein resides in the extracellular space. The protein localises to the extracellular matrix. Functionally, ligand for members of the frizzled family of seven transmembrane receptors. Acts in the canonical Wnt signaling pathway by promoting beta-catenin-dependent transcriptional activation. Involved in neurogenesis. Performs a partially redundant function with wnt10b in the formation of the midbrain-hindbrain boundary (MHB) organizer. In the hindbrain, mediates lateral inhibition of boundary cell specification, probably via up-regulation of proneural and Delta gene expression in non-boundary cells; localized expression of wnt1 in boundary cells is maintained via rfng-mediated modulation of Notch activity. This Danio rerio (Zebrafish) protein is Protein Wnt-1 (wnt1).